Here is a 157-residue protein sequence, read N- to C-terminus: SsrA-binding protein (157 aa).

This sequence belongs to the SmpB family.

The protein localises to the cytoplasm. Its function is as follows. Required for rescue of stalled ribosomes mediated by trans-translation. Binds to transfer-messenger RNA (tmRNA), required for stable association of tmRNA with ribosomes. tmRNA and SmpB together mimic tRNA shape, replacing the anticodon stem-loop with SmpB. tmRNA is encoded by the ssrA gene; the 2 termini fold to resemble tRNA(Ala) and it encodes a 'tag peptide', a short internal open reading frame. During trans-translation Ala-aminoacylated tmRNA acts like a tRNA, entering the A-site of stalled ribosomes, displacing the stalled mRNA. The ribosome then switches to translate the ORF on the tmRNA; the nascent peptide is terminated with the 'tag peptide' encoded by the tmRNA and targeted for degradation. The ribosome is freed to recommence translation, which seems to be the essential function of trans-translation. This is SsrA-binding protein from Syntrophomonas wolfei subsp. wolfei (strain DSM 2245B / Goettingen).